Reading from the N-terminus, the 229-residue chain is MNNININIKIIKKKIQYFLKKNNYPLKKIKIIAVSKNQGIDKIKLAISSGIHEFGENYVQEGIDKIQKLKKYQNIIWHFIGKVQSNKTKIIAENFDWCQTIDREKIAILLNKYREKKSFPMNVLMQINISNEVTKNGICIKNYKKLAKTISLMPNLNFRGIMMMPEVEKKMIKQNDNYKNGNFIFNELKKEYQSIDTLSLGTSFDIENALLFHSNMIRIGRFIFKNQVR.

The residue at position 36 (K36) is an N6-(pyridoxal phosphate)lysine.

This sequence belongs to the pyridoxal phosphate-binding protein YggS/PROSC family. In terms of assembly, monomer.

Pyridoxal 5'-phosphate (PLP)-binding protein, which is involved in PLP homeostasis. The chain is Pyridoxal phosphate homeostasis protein from Buchnera aphidicola subsp. Schizaphis graminum (strain Sg).